Consider the following 316-residue polypeptide: CRISPR-associated endonuclease Cas1 (316 aa).

The Mn(2+) site is built by Glu143, His206, and Glu221.

The protein belongs to the CRISPR-associated endonuclease Cas1 family. In terms of assembly, homodimer, forms a heterotetramer with a Cas2 homodimer. Mg(2+) is required as a cofactor. It depends on Mn(2+) as a cofactor.

In terms of biological role, CRISPR (clustered regularly interspaced short palindromic repeat), is an adaptive immune system that provides protection against mobile genetic elements (viruses, transposable elements and conjugative plasmids). CRISPR clusters contain spacers, sequences complementary to antecedent mobile elements, and target invading nucleic acids. CRISPR clusters are transcribed and processed into CRISPR RNA (crRNA). Acts as a dsDNA endonuclease. Involved in the integration of spacer DNA into the CRISPR cassette. This is CRISPR-associated endonuclease Cas1 from Aquifex aeolicus (strain VF5).